A 191-amino-acid chain; its full sequence is Phosphoheptose isomerase (191 aa).

The SIS domain maps to 37–191 (IADSFKQDGK…IIQLIEKEME (155 aa)). 52-54 (NGG) is a substrate binding site. 2 residues coordinate Zn(2+): His61 and Glu65. Substrate is bound by residues Glu65, 93 to 94 (ND), 119 to 121 (STS), Ser124, and Gln172. Residues Gln172 and His180 each coordinate Zn(2+).

This sequence belongs to the SIS family. GmhA subfamily. As to quaternary structure, homotetramer. Requires Zn(2+) as cofactor.

It is found in the cytoplasm. It carries out the reaction 2 D-sedoheptulose 7-phosphate = D-glycero-alpha-D-manno-heptose 7-phosphate + D-glycero-beta-D-manno-heptose 7-phosphate. It participates in carbohydrate biosynthesis; D-glycero-D-manno-heptose 7-phosphate biosynthesis; D-glycero-alpha-D-manno-heptose 7-phosphate and D-glycero-beta-D-manno-heptose 7-phosphate from sedoheptulose 7-phosphate: step 1/1. It functions in the pathway bacterial outer membrane biogenesis; LPS core biosynthesis. In terms of biological role, catalyzes the isomerization of sedoheptulose 7-phosphate in D-glycero-D-manno-heptose 7-phosphate. The protein is Phosphoheptose isomerase of Vibrio parahaemolyticus serotype O3:K6 (strain RIMD 2210633).